The chain runs to 233 residues: Large ribosomal subunit protein uL1 (233 aa).

This sequence belongs to the universal ribosomal protein uL1 family. Part of the 50S ribosomal subunit.

Its function is as follows. Binds directly to 23S rRNA. The L1 stalk is quite mobile in the ribosome, and is involved in E site tRNA release. Protein L1 is also a translational repressor protein, it controls the translation of the L11 operon by binding to its mRNA. This Rhizobium johnstonii (strain DSM 114642 / LMG 32736 / 3841) (Rhizobium leguminosarum bv. viciae) protein is Large ribosomal subunit protein uL1.